We begin with the raw amino-acid sequence, 626 residues long: ATP-dependent zinc metalloprotease FtsH (626 aa).

The Cytoplasmic portion of the chain corresponds to 1–7 (MNGNRPN). The chain crosses the membrane as a helical span at residues 8 to 28 (YISLIFAALVILSLFWLVRSF). Over 29-108 (YFDTSAPSKM…VTGEKGVSSS (80 aa)) the chain is Periplasmic. Residues 109 to 129 (FWVNVIGNVIFIGFLLFMFFF) traverse the membrane as a helical segment. Over 130 to 626 (MMRTISGRNN…RAAAGSEQDS (497 aa)) the chain is Cytoplasmic. 202–209 (GPPGTGKT) is an ATP binding site. Residue H424 participates in Zn(2+) binding. E425 is a catalytic residue. Zn(2+)-binding residues include H428 and D501.

This sequence in the central section; belongs to the AAA ATPase family. In the C-terminal section; belongs to the peptidase M41 family. Homohexamer. Zn(2+) is required as a cofactor.

The protein localises to the cell inner membrane. Acts as a processive, ATP-dependent zinc metallopeptidase for both cytoplasmic and membrane proteins. Plays a role in the quality control of integral membrane proteins. This chain is ATP-dependent zinc metalloprotease FtsH, found in Pseudothermotoga lettingae (strain ATCC BAA-301 / DSM 14385 / NBRC 107922 / TMO) (Thermotoga lettingae).